A 107-amino-acid chain; its full sequence is Putative nucleosome assembly protein 1-like 6 (107 aa).

It belongs to the nucleosome assembly protein (NAP) family.

The protein is Putative nucleosome assembly protein 1-like 6 of Homo sapiens (Human).